We begin with the raw amino-acid sequence, 397 residues long: Pentatricopeptide repeat-containing protein At1g80150, mitochondrial (397 aa).

The transit peptide at 1-81 (MLSLRHIRRF…FAFEDTVSRL (81 aa)) directs the protein to the mitochondrion. PPR repeat units follow at residues 105 to 139 (REGF…GCKR), 140 to 170 (SVKS…APSK), 176 to 210 (DAVS…GLTP), 211 to 245 (DVVT…GCKP), 246 to 280 (NLTT…QVEP), 281 to 315 (DSIT…GYKP), 316 to 350 (NLKI…KWYP), and 351 to 381 (NLDT…VHRR).

The protein belongs to the PPR family. P subfamily.

It is found in the mitochondrion. In Arabidopsis thaliana (Mouse-ear cress), this protein is Pentatricopeptide repeat-containing protein At1g80150, mitochondrial.